A 142-amino-acid chain; its full sequence is Large ribosomal subunit protein bL17 (142 aa).

Belongs to the bacterial ribosomal protein bL17 family. Part of the 50S ribosomal subunit. Contacts protein L32.

The protein is Large ribosomal subunit protein bL17 of Chlamydia muridarum (strain MoPn / Nigg).